We begin with the raw amino-acid sequence, 558 residues long: Dimethylaniline monooxygenase [N-oxide-forming] 4 (558 aa).

Residues 9 to 13, Glu32, and 40 to 41 contribute to the FAD site; these read GAGVS and LW. Residues 60-61 and 195-198 each bind NADP(+); these read TN and TGGD. The chain crosses the membrane as a helical span at residues 517-537; that stretch reads AWGAPVLLASLLLICKSSLFL.

It belongs to the FMO family. Requires FAD as cofactor. As to expression, liver.

Its subcellular location is the microsome membrane. The protein resides in the endoplasmic reticulum membrane. It catalyses the reaction N,N-dimethylaniline + NADPH + O2 + H(+) = N,N-dimethylaniline N-oxide + NADP(+) + H2O. Functionally, this protein is involved in the oxidative metabolism of a variety of xenobiotics such as drugs and pesticides. The sequence is that of Dimethylaniline monooxygenase [N-oxide-forming] 4 (FMO4) from Homo sapiens (Human).